A 119-amino-acid chain; its full sequence is Ribosome-binding factor A (119 aa).

This sequence belongs to the RbfA family. Monomer. Binds 30S ribosomal subunits, but not 50S ribosomal subunits or 70S ribosomes.

It is found in the cytoplasm. In terms of biological role, one of several proteins that assist in the late maturation steps of the functional core of the 30S ribosomal subunit. Associates with free 30S ribosomal subunits (but not with 30S subunits that are part of 70S ribosomes or polysomes). Required for efficient processing of 16S rRNA. May interact with the 5'-terminal helix region of 16S rRNA. This is Ribosome-binding factor A from Geobacter sp. (strain M21).